An 87-amino-acid chain; its full sequence is Cytochrome c6 (87 aa).

Cys10, Cys13, His14, and Met56 together coordinate heme c.

The protein belongs to the cytochrome c family. PetJ subfamily. In terms of assembly, monomer. Binds 1 heme c group covalently per subunit.

It is found in the plastid. The protein resides in the chloroplast thylakoid lumen. Functions as an electron carrier between membrane-bound cytochrome b6-f and photosystem I in oxygenic photosynthesis. This chain is Cytochrome c6 (petJ), found in Euglena gracilis.